The primary structure comprises 214 residues: Pyridoxine/pyridoxamine 5'-phosphate oxidase (214 aa).

Substrate-binding positions include 9–12 and Lys-67; that span reads RREY. FMN contacts are provided by residues 62 to 67, 77 to 78, Arg-83, Lys-84, and Gln-106; these read RTVLLK and YS. The substrate site is built by Tyr-124, Arg-128, and Ser-132. Residues 141–142 and Trp-186 each bind FMN; that span reads QS. Residue 192-194 coordinates substrate; sequence RLH. Arg-196 serves as a coordination point for FMN.

This sequence belongs to the pyridoxamine 5'-phosphate oxidase family. As to quaternary structure, homodimer. The cofactor is FMN.

It carries out the reaction pyridoxamine 5'-phosphate + O2 + H2O = pyridoxal 5'-phosphate + H2O2 + NH4(+). The catalysed reaction is pyridoxine 5'-phosphate + O2 = pyridoxal 5'-phosphate + H2O2. Its pathway is cofactor metabolism; pyridoxal 5'-phosphate salvage; pyridoxal 5'-phosphate from pyridoxamine 5'-phosphate: step 1/1. It participates in cofactor metabolism; pyridoxal 5'-phosphate salvage; pyridoxal 5'-phosphate from pyridoxine 5'-phosphate: step 1/1. Catalyzes the oxidation of either pyridoxine 5'-phosphate (PNP) or pyridoxamine 5'-phosphate (PMP) into pyridoxal 5'-phosphate (PLP). The protein is Pyridoxine/pyridoxamine 5'-phosphate oxidase of Porphyromonas gingivalis (strain ATCC 33277 / DSM 20709 / CIP 103683 / JCM 12257 / NCTC 11834 / 2561).